A 465-amino-acid chain; its full sequence is Ribosome biogenesis protein YTM1 (465 aa).

Positions 18–99 (ARLRFSTRDE…ETTLDVEYVR (82 aa)) are ubiquitin-like (UBL) domain. WD repeat units follow at residues 111–153 (LHDD…IHTS), 160–198 (GHQS…KGIT), 205–242 (GHKG…SPAV), 277–317 (GHTA…LVDT), 319–358 (TTSH…TTVS), 364–404 (GHTN…TDTD), and 427–465 (GDGV…PKTA). The interval 235-272 (KKSESPAVPQNLLPSSSARSSKRRKLNSSASTSQRGPL) is disordered.

Belongs to the WD repeat WDR12/YTM1 family. Component of the NOP7 complex, composed of ERB1, NOP7 and YTM1. The complex is held together by ERB1, which interacts with NOP7 via its N-terminal domain and with YTM1 via a high-affinity interaction between the seven-bladed beta-propeller domains of the 2 proteins. The NOP7 complex associates with the 66S pre-ribosome. Interacts (via UBL domain) with MDN1 (via VWFA/MIDAS domain).

The protein localises to the nucleus. It is found in the nucleolus. Its subcellular location is the nucleoplasm. Functionally, component of the NOP7 complex, which is required for maturation of the 25S and 5.8S ribosomal RNAs and formation of the 60S ribosome. In Coccidioides immitis (strain RS) (Valley fever fungus), this protein is Ribosome biogenesis protein YTM1.